The sequence spans 872 residues: Valine--tRNA ligase (872 aa).

The short motif at 46 to 56 (PNVTGKLHIGH) is the 'HIGH' region element. The 'KMSKS' region motif lies at 523 to 527 (KMSKS). K526 is a binding site for ATP. Residues 796–872 (IEIANDSFIN…KDKLKELTND (77 aa)) are a coiled coil.

It belongs to the class-I aminoacyl-tRNA synthetase family. ValS type 1 subfamily. As to quaternary structure, monomer.

The protein resides in the cytoplasm. It catalyses the reaction tRNA(Val) + L-valine + ATP = L-valyl-tRNA(Val) + AMP + diphosphate. Its function is as follows. Catalyzes the attachment of valine to tRNA(Val). As ValRS can inadvertently accommodate and process structurally similar amino acids such as threonine, to avoid such errors, it has a 'posttransfer' editing activity that hydrolyzes mischarged Thr-tRNA(Val) in a tRNA-dependent manner. The polypeptide is Valine--tRNA ligase (Mycoplasma mycoides subsp. mycoides SC (strain CCUG 32753 / NCTC 10114 / PG1)).